Here is a 436-residue protein sequence, read N- to C-terminus: MANEGSDPLLQYMISPRLKKPPQLLFPLPEDNEVAIPMPMTPSEFKERLIFGPFSCSPRDSSHFIDSMKQPSPSSSSTAVNNPFSDSSTLDPLLPPPPPQPEPWLSDQTSSHCQGHALHRSKTAPAMAVINDLHHPIRQKDPTETSRSVVRQAFALLVVYLSLGVLIYWLNRDHYVVNQTHPVVDGLYFCIVTMCTIGYGDITPNSVVTKLFSIMFVLVGFGFIDILLSGMVSYVLDLQESYMLDSAKRRDEPEKRRSYIIDVKKGRMRIRLKVALALGVVVLCIAVGVGIMHFIEEIGWLDSFYLSVMSVTTVGYGDRAFKTLPGRLFAAIWLLVSTLAVARAFLYLAEARVDKRNRERAKKVLCETMSVSQFFAADIDNNGCVSKAEYVIYKLKEMEKITDKDILPISKQFDKLDRCSNGKITLLDLLEGGSGD.

Topologically, residues 1 to 148 (MANEGSDPLL…QKDPTETSRS (148 aa)) are cytoplasmic. The disordered stretch occupies residues 62–117 (SHFIDSMKQPSPSSSSTAVNNPFSDSSTLDPLLPPPPPQPEPWLSDQTSSHCQGHA). Residues 71–92 (PSPSSSSTAVNNPFSDSSTLDP) are compositionally biased toward low complexity. Residues 93–102 (LLPPPPPQPE) show a composition bias toward pro residues. A helical transmembrane segment spans residues 149 to 169 (VVRQAFALLVVYLSLGVLIYW). The pore-forming intramembrane region spans 185–204 (DGLYFCIVTMCTIGYGDITP). A helical membrane pass occupies residues 212 to 232 (FSIMFVLVGFGFIDILLSGMV). Topologically, residues 233-274 (SYVLDLQESYMLDSAKRRDEPEKRRSYIIDVKKGRMRIRLKV) are cytoplasmic. A helical transmembrane segment spans residues 275 to 295 (ALALGVVVLCIAVGVGIMHFI). Residues 302–321 (DSFYLSVMSVTTVGYGDRAF) constitute an intramembrane region (pore-forming). Residues 328–348 (LFAAIWLLVSTLAVARAFLYL) form a helical membrane-spanning segment. The Cytoplasmic segment spans residues 349 to 436 (AEARVDKRNR…LDLLEGGSGD (88 aa)). 2 EF-hand domains span residues 365–400 (LCET…EMEK) and 404–436 (KDIL…GSGD). Residues Asp378, Asp380, Asn382, Cys384, Glu389, Asp417, Asn421, Lys423, and Asp428 each contribute to the Ca(2+) site.

The protein belongs to the two pore domain potassium channel (TC 1.A.1.7) family. As to quaternary structure, homodimer. In terms of tissue distribution, expressed in roots, cotyledons, stems, hypocotyls, leaves and flowers. Detected in root tips and in mesophyll cells and guard cells of the leaves.

It is found in the vacuole membrane. The protein localises to the plastid. It localises to the chloroplast thylakoid membrane. With respect to regulation, inhibited by barium, but not by tetraethylammonium. Two-pore potassium channel modulating the proton motive force (pmf) necessary to convert photochemical energy into physiological functions. Mediates the potassium efflux from the thylakoid lumen required for the regulation of the transmembrane electrical potential, the enhancement of the pH gradient for ATP synthesis, the regulation of electron flow, and pH-mediated photoprotective responses. Requires calcium for channel activity. The chain is Two-pore potassium channel 3 from Arabidopsis thaliana (Mouse-ear cress).